A 130-amino-acid chain; its full sequence is uncharacterized protein (130 aa).

The first 18 residues, 1–18, serve as a signal peptide directing secretion; sequence MVEVWWSLIGAAVPALIA.

This is an uncharacterized protein from Arabidopsis thaliana (Mouse-ear cress).